A 414-amino-acid polypeptide reads, in one-letter code: Putative competence-damage inducible protein (414 aa).

It belongs to the CinA family.

This Limosilactobacillus fermentum (strain NBRC 3956 / LMG 18251) (Lactobacillus fermentum) protein is Putative competence-damage inducible protein.